Consider the following 757-residue polypeptide: Protein aardvark (757 aa).

Disordered stretches follow at residues 39 to 63 (SSIN…DSNN), 122 to 166 (LEEN…SSIL), and 256 to 285 (SSNG…IESS). Residues 121–205 (ILEENNNNNN…FNQFNFLEGI (85 aa)) adopt a coiled-coil conformation. 2 stretches are compositionally biased toward low complexity: residues 125–164 (NNNN…SSSS) and 256–270 (SSNG…NNNN). The F-box domain occupies 310–356 (QFDIFLIPTEMLVHLLSFLSANDLWRISLTCKRIWYIVDVFKFWELL). 6 ARM repeats span residues 454–498 (GGIS…SNDN), 506–548 (GGIQ…VAIE), 549–591 (GGIQ…SAKE), 592–634 (GGIG…ISRQ), 635–678 (NGIQ…IARE), and 679–723 (GGIN…RSGG).

This sequence belongs to the beta-catenin family.

It localises to the cytoplasm. The protein localises to the cell junction. In terms of biological role, required to regulate pattern formation during multi-cellular stages of development and for the formation of adherens junctions. Plays a structural role during the regulation of stalk formation. Involved in cell signaling. Required for spore-cell differentiation. Overexpression increases number and size of cell junctions and reduces spore-cell formation. The chain is Protein aardvark (aarA) from Dictyostelium discoideum (Social amoeba).